A 394-amino-acid polypeptide reads, in one-letter code: Chalcone synthase (394 aa).

Cys168 is an active-site residue.

It belongs to the thiolase-like superfamily. Chalcone/stilbene synthases family.

It carries out the reaction (E)-4-coumaroyl-CoA + 3 malonyl-CoA + 3 H(+) = 2',4,4',6'-tetrahydroxychalcone + 3 CO2 + 4 CoA. The protein operates within secondary metabolite biosynthesis; flavonoid biosynthesis. Its function is as follows. The primary product of this enzyme is 4,2',4',6'-tetrahydroxychalcone (also termed naringenin-chalcone or chalcone) which can under specific conditions spontaneously isomerize into naringenin. The sequence is that of Chalcone synthase (CHS) from Raphanus sativus (Radish).